The chain runs to 518 residues: Probable alginate O-acetylase AlgI (518 aa).

The next 8 membrane-spanning stretches (helical) occupy residues valine 2–glycine 24, phenylalanine 39–isoleucine 61, tryptophan 78–valine 100, phenylalanine 115–isoleucine 137, asparagine 150–phenylalanine 172, glycine 319–isoleucine 341, phenylalanine 354–phenylalanine 373, and alanine 402–leucine 424. The active site involves histidine 322. The disordered stretch occupies residues serine 435–proline 456. Residues leucine 493 to tyrosine 515 form a helical membrane-spanning segment.

Belongs to the membrane-bound acyltransferase family.

The protein localises to the cell inner membrane. It participates in glycan biosynthesis; alginate biosynthesis. Functionally, together with AlgJ and AlgF, forms an inner membrane complex which probably interacts with the alginate polymerization-transport complex and adds acetyl groups at the O-2 and O-3 positions of mannuronate residues. Acetylation of alginate is important for the architecture of biofilms and increases the ability of alginate to act as a defense barrier. The polypeptide is Probable alginate O-acetylase AlgI (algI) (Pseudomonas syringae pv. tomato (strain ATCC BAA-871 / DC3000)).